The sequence spans 216 residues: Transmembrane protein 163a (216 aa).

The Cytoplasmic portion of the chain corresponds to 1-15 (MRLKPHEAQSYRKKA). The chain crosses the membrane as a helical span at residues 16–36 (LWVSWISIVVTLILAVAGFTV). Residues 37–43 (SFMRHSA) are Extracellular-facing. A helical membrane pass occupies residues 44–64 (SAFGFAFDATLDVLSSIIVLW). Residues 65–77 (RYSNAAAVHSAHR) are Cytoplasmic-facing. Residues 78–98 (EYIACVILGVIFILSSLCILG) form a helical membrane-spanning segment. The Extracellular segment spans residues 99-114 (KAIHDLATKLLPEVDD). The helical transmembrane segment at 115–135 (FLFSVSIVSGLMCVILAVAKF) threads the bilayer. Residues 136–144 (MLGRILTSR) are Cytoplasmic-facing. Residues 145-165 (ALITDGFNSMVGGIMGFSILI) form a helical membrane-spanning segment. The Extracellular portion of the chain corresponds to 166-182 (SAEVFRHYPNVWYLDGT). A helical transmembrane segment spans residues 183-203 (IGILIGLVIQAYGVKLLVDMI). Over 204–216 (PRVRQTRNYERFE) the chain is Cytoplasmic.

Belongs to the TMEM163 family.

The protein localises to the cytoplasmic vesicle. The protein resides in the secretory vesicle. Its subcellular location is the synaptic vesicle membrane. It is found in the early endosome membrane. It localises to the late endosome membrane. The protein localises to the lysosome membrane. The protein resides in the cell membrane. It catalyses the reaction Zn(2+)(in) = Zn(2+)(out). Functionally, zinc ion transporter that mediates zinc efflux and plays a crucial role in intracellular zinc homeostasis. Binds the divalent cations Zn(2+), Ni(2+), and to a minor extent Cu(2+). Is a functional modulator of P2X purinoceptors, including P2RX1, P2RX3, P2RX4 and P2RX7. Plays a role in central nervous system development and is required for myelination, and survival and proliferation of oligodendrocytes. The polypeptide is Transmembrane protein 163a (Danio rerio (Zebrafish)).